Reading from the N-terminus, the 75-residue chain is MARFFRRRKFCRFTAEDVQEIDYKDVVTLKNYITEAGKIVPSRITGTRAKYQRQLARAIKRSRYLALLPYTDKHL.

Belongs to the bacterial ribosomal protein bS18 family. In terms of assembly, part of the 30S ribosomal subunit. Forms a tight heterodimer with protein bS6.

Its function is as follows. Binds as a heterodimer with protein bS6 to the central domain of the 16S rRNA, where it helps stabilize the platform of the 30S subunit. The protein is Small ribosomal subunit protein bS18 of Photobacterium profundum (strain SS9).